The primary structure comprises 430 residues: Trigger factor (430 aa).

Positions 157–242 (GDLVALETWS…AVEVSEPVLP (86 aa)) constitute a PPIase FKBP-type domain.

This sequence belongs to the FKBP-type PPIase family. Tig subfamily.

Its subcellular location is the cytoplasm. It catalyses the reaction [protein]-peptidylproline (omega=180) = [protein]-peptidylproline (omega=0). Functionally, involved in protein export. Acts as a chaperone by maintaining the newly synthesized protein in an open conformation. Functions as a peptidyl-prolyl cis-trans isomerase. The sequence is that of Trigger factor from Xanthomonas oryzae pv. oryzae (strain PXO99A).